Reading from the N-terminus, the 206-residue chain is UPF0502 protein Acid_1185 (206 aa).

This sequence belongs to the UPF0502 family.

The sequence is that of UPF0502 protein Acid_1185 from Solibacter usitatus (strain Ellin6076).